Here is a 216-residue protein sequence, read N- to C-terminus: MTIRNYNYHMTHFVISAPDIRHLPRDEGIEVAFAGRSNAGKSSALNTLTNQKGLARTSKTPGRTQLINLFEVVDGVRLVDLPGYGYAEVPEEMKLKWQRALGEYLQKRNCLKGLVVLMDIRHPLKDLDQQMITWAVAVGTPVLLLLTKADKLASGARKAQLNLVREAIIPFMGDIQVEAFSSLKKIGVDKLREKLDTWFSEIPPEVMAEEFDGEGE.

Residues glutamate 27 to glutamate 201 form the EngB-type G domain. Residues glycine 35 to serine 42, glycine 62 to leucine 66, aspartate 80 to glycine 83, threonine 147 to aspartate 150, and phenylalanine 180 to serine 182 each bind GTP. Residues serine 42 and threonine 64 each coordinate Mg(2+).

Belongs to the TRAFAC class TrmE-Era-EngA-EngB-Septin-like GTPase superfamily. EngB GTPase family. Mg(2+) is required as a cofactor.

Functionally, necessary for normal cell division and for the maintenance of normal septation. The protein is Probable GTP-binding protein EngB of Yersinia pseudotuberculosis serotype O:1b (strain IP 31758).